Consider the following 127-residue polypeptide: DNA-directed RNA polymerases I, II, and III subunit RPABC2 (127 aa).

Over residues 1 to 34 (MSDNEDNFDGDDFDDVEEDEGLDDLENAEEEGQE) the composition is skewed to acidic residues. Residues 1–53 (MSDNEDNFDGDDFDDVEEDEGLDDLENAEEEGQENVEILPSGERPQANQKRIT) form a disordered region. At S2 the chain carries N-acetylserine. S2 carries the phosphoserine; by CK2 modification.

Belongs to the archaeal Rpo6/eukaryotic RPB6 RNA polymerase subunit family. Component of the RNA polymerase I (Pol I), RNA polymerase II (Pol II) and RNA polymerase III (Pol III) complexes consisting of at least 13, 12 and 17 subunits, respectively. Pol I complex consists of a ten-subunit catalytic core composed of POLR1A/RPA1, POLR1B/RPA2, POLR1C/RPAC1, POLR1D/RPAC2, POLR1H/RPA12, POLR2E/RPABC1, POLR2F/RPABC2, POLR2H/RPABC3, POLR2K/RPABC4 and POLR2L/RPABC5; a mobile stalk subunit POLR1F/RPA43 protruding from the core and additional subunits homologous to general transcription factors POLR1E/RPA49 and POLR1G/RPA34. Part of Pol I pre-initiation complex (PIC), in which Pol I core assembles with RRN3 and promoter-bound UTBF and SL1/TIF-IB complex. Pol II complex contains a ten-subunit catalytic core composed of POLR2A/RPB1, POLR2B/RPB2, POLR2C/RPB3, POLR2I/RPB9, POLR2J/RPB11, POLR2E/RPABC1, POLR2F/RPABC2, POLR2H/RPABC3, POLR2K/RPABC4 and POLR2L/RPABC5 and a mobile stalk composed of two subunits POLR2D/RPB4 and POLR2G/RPB7. Part of Pol II(G) complex, in which Pol II core associates with an additional subunit POLR2M; unlike conventional Pol II, Pol II(G) functions as a transcriptional repressor. Part of TBP-based Pol II pre-initiation complex (PIC), in which Pol II core assembles with general transcription factors and other specific initiation factors including GTF2E1, GTF2E2, GTF2F1, GTF2F2, TCEA1, ERCC2, ERCC3, GTF2H2, GTF2H3, GTF2H4, GTF2H5, GTF2A1, GTF2A2, GTF2B and TBP; this large multi-subunit PIC complex mediates DNA unwinding and targets Pol II core to the transcription start site where the first phosphodiester bond forms. Pol III complex consists of a ten-subunit catalytic core composed of POLR3A/RPC1, POLR3B/RPC2, POLR1C/RPAC1, POLR1D/RPAC2, POLR3K/RPC10, POLR2E/RPABC1, POLR2F/RPABC2, POLR2H/RPABC3, POLR2K/RPABC4 and POLR2L/RPABC5; a mobile stalk composed of two subunits POLR3H/RPC8 and CRCP/RPC9, protruding from the core and functioning primarily in transcription initiation; and additional subunits homologous to general transcription factors of the RNA polymerase II machinery, POLR3C/RPC3-POLR3F/RPC6-POLR3G/RPC7 heterotrimer required for transcription initiation and POLR3D/RPC4-POLR3E/RPC5 heterodimer involved in both transcription initiation and termination.

It localises to the nucleus. The protein resides in the nucleolus. Its function is as follows. DNA-dependent RNA polymerase catalyzes the transcription of DNA into RNA using the four ribonucleoside triphosphates as substrates. Common component of RNA polymerases I, II, and III which synthesize ribosomal RNA precursors, mRNA precursors and many functional non-coding RNAs, and small RNAs, such as 5S rRNA and tRNAs, respectively. Pol II is the central component of the basal RNA polymerase II transcription machinery. Pols are composed of mobile elements that move relative to each other. In Pol II, POLR2F/RPABC2 is part of the clamp element and together with parts of POLR2A/RPB1 and POLR2B/RPB2 forms a pocket to which the POLR2D/RPB4-POLR2G/RPB7 subcomplex binds. This Mus musculus (Mouse) protein is DNA-directed RNA polymerases I, II, and III subunit RPABC2.